A 74-amino-acid polypeptide reads, in one-letter code: Exodeoxyribonuclease 7 small subunit (74 aa).

The protein belongs to the XseB family. In terms of assembly, heterooligomer composed of large and small subunits.

The protein localises to the cytoplasm. It catalyses the reaction Exonucleolytic cleavage in either 5'- to 3'- or 3'- to 5'-direction to yield nucleoside 5'-phosphates.. Its function is as follows. Bidirectionally degrades single-stranded DNA into large acid-insoluble oligonucleotides, which are then degraded further into small acid-soluble oligonucleotides. The chain is Exodeoxyribonuclease 7 small subunit from Neisseria meningitidis serogroup C / serotype 2a (strain ATCC 700532 / DSM 15464 / FAM18).